The chain runs to 252 residues: Ubiquitin carboxyl-terminal hydrolase isozyme L1 (252 aa).

Position 1 is an N-acetylmethionine (Met-1). In terms of domain architecture, UCH catalytic spans 2–250; it reads QLKPMEINPE…VRFSAVALCK (249 aa). An interaction with ubiquitin region spans residues 5–10; that stretch reads PMEINP. Cys-119 functions as the Nucleophile in the catalytic mechanism. Ser-154 is modified (phosphoserine). Residue His-190 is the Proton donor of the active site. The interaction with ubiquitin stretch occupies residues 240–245; that stretch reads EVRFSA. Cys-249 carries the S-farnesyl cysteine lipid modification. A propeptide spans 250-252 (removed in mature form); the sequence is KAA.

Belongs to the peptidase C12 family. In terms of assembly, monomer. Homodimer. Interacts with COPS5 and SNCA. Post-translationally, O-glycosylated. As to expression, neurons and cells of the diffuse neuroendocrine system and their tumors.

It localises to the cytoplasm. It is found in the endoplasmic reticulum membrane. The catalysed reaction is Thiol-dependent hydrolysis of ester, thioester, amide, peptide and isopeptide bonds formed by the C-terminal Gly of ubiquitin (a 76-residue protein attached to proteins as an intracellular targeting signal).. In terms of biological role, ubiquitin-protein hydrolase involved both in the processing of ubiquitin precursors and of ubiquitinated proteins. This enzyme is a thiol protease that recognizes and hydrolyzes a peptide bond at the C-terminal glycine of ubiquitin. Also binds to free monoubiquitin and may prevent its degradation in lysosomes. The homodimer may have ATP-independent ubiquitin ligase activity. The chain is Ubiquitin carboxyl-terminal hydrolase isozyme L1 (UCHL1) from Bos taurus (Bovine).